A 258-amino-acid chain; its full sequence is Isoprenyl transferase (258 aa).

Aspartate 38 is an active-site residue. Aspartate 38 lines the Mg(2+) pocket. Residues 39-42, tryptophan 43, arginine 51, histidine 55, and 83-85 each bind substrate; these read GNGR and STE. Residue asparagine 86 is the Proton acceptor of the active site. Substrate contacts are provided by residues tryptophan 87, arginine 89, arginine 206, and 212–214; that span reads RIS. Glutamate 225 serves as a coordination point for Mg(2+).

Belongs to the UPP synthase family. As to quaternary structure, homodimer. Mg(2+) is required as a cofactor.

In terms of biological role, catalyzes the condensation of isopentenyl diphosphate (IPP) with allylic pyrophosphates generating different type of terpenoids. In Bacillus anthracis, this protein is Isoprenyl transferase.